The primary structure comprises 257 residues: Protein YIPF5 (257 aa).

Topologically, residues 1–124 (MSGFDNLNSG…RASDGSIMNE (124 aa)) are cytoplasmic. Positions 75–106 (PPTPQTFYGDSFEEEPPLLEELGINFDHIWQK) are interaction with Sec23. A helical transmembrane segment spans residues 125-145 (TDLAGPVVFCLAFGATLLLAG). A topological domain (lumenal) is located at residue lysine 146. The helical transmembrane segment at 147–167 (IQFGYVYGISAIGCLGMFCLL) threads the bilayer. The Cytoplasmic segment spans residues 168–173 (NLMSMT). The helical transmembrane segment at 174-194 (GVSFGCVASVLGYCLLPMILL) threads the bilayer. Residues 195-196 (SS) lie on the Lumenal side of the membrane. Residues 197-217 (FAVVFSLQGMVGILLTATIIG) form a helical membrane-spanning segment. Residues 218–236 (WCSFSASKIFISALAMDGQ) lie on the Cytoplasmic side of the membrane. Residues 237–257 (QLLVAYPCALLYGVFALISVF) traverse the membrane as a helical segment.

Belongs to the YIP1 family. In terms of assembly, interacts with the COPII coat components Sec23 (SEC23A and/or SEC23B) and Sec24 (SEC24A and/or SEC24B). Interacts with YIF1A. May interact with RAB1A. Interacts with YIPF3 and YIPF4.

It is found in the endoplasmic reticulum membrane. The protein localises to the golgi apparatus. It localises to the cis-Golgi network membrane. The protein resides in the cytoplasmic vesicle. Its subcellular location is the COPII-coated vesicle. In terms of biological role, plays a role in transport between endoplasmic reticulum and Golgi. In pancreatic beta cells, required to transport proinsulin from endoplasmic reticulum into the Golgi. This chain is Protein YIPF5, found in Rattus norvegicus (Rat).